The primary structure comprises 303 residues: Glutamyl-Q tRNA(Asp) synthetase (303 aa).

Residues 16 to 20 and E52 contribute to the L-glutamate site; that span reads RFAPS. Positions 19–29 match the 'HIGH' region motif; sequence PSPSGPLHFGS. 4 residues coordinate Zn(2+): C108, C110, Y122, and C126. L-glutamate is bound by residues Y177 and R195. The 'KMSKS' region signature appears at 233-237; it reads KLSKQ. K236 provides a ligand contact to ATP.

The protein belongs to the class-I aminoacyl-tRNA synthetase family. GluQ subfamily. The cofactor is Zn(2+).

Its function is as follows. Catalyzes the tRNA-independent activation of glutamate in presence of ATP and the subsequent transfer of glutamate onto a tRNA(Asp). Glutamate is transferred on the 2-amino-5-(4,5-dihydroxy-2-cyclopenten-1-yl) moiety of the queuosine in the wobble position of the QUC anticodon. The sequence is that of Glutamyl-Q tRNA(Asp) synthetase from Vibrio vulnificus (strain YJ016).